The sequence spans 388 residues: Succinate--CoA ligase [ADP-forming] subunit beta (388 aa).

An ATP-grasp domain is found at 9–244 (KEILRKFGVA…LDEEDPAEIE (236 aa)). Residues lysine 46, 53–55 (GRG), glutamate 99, alanine 102, and glutamate 107 contribute to the ATP site. Asparagine 199 and aspartate 213 together coordinate Mg(2+). Substrate is bound by residues asparagine 264 and 321 to 323 (GIM).

It belongs to the succinate/malate CoA ligase beta subunit family. In terms of assembly, heterotetramer of two alpha and two beta subunits. It depends on Mg(2+) as a cofactor.

It catalyses the reaction succinate + ATP + CoA = succinyl-CoA + ADP + phosphate. The catalysed reaction is GTP + succinate + CoA = succinyl-CoA + GDP + phosphate. The protein operates within carbohydrate metabolism; tricarboxylic acid cycle; succinate from succinyl-CoA (ligase route): step 1/1. Functionally, succinyl-CoA synthetase functions in the citric acid cycle (TCA), coupling the hydrolysis of succinyl-CoA to the synthesis of either ATP or GTP and thus represents the only step of substrate-level phosphorylation in the TCA. The beta subunit provides nucleotide specificity of the enzyme and binds the substrate succinate, while the binding sites for coenzyme A and phosphate are found in the alpha subunit. This is Succinate--CoA ligase [ADP-forming] subunit beta from Burkholderia lata (strain ATCC 17760 / DSM 23089 / LMG 22485 / NCIMB 9086 / R18194 / 383).